The following is a 396-amino-acid chain: Elongation factor Tu (396 aa).

One can recognise a tr-type G domain in the interval 10 to 206 (KPHVNIGTIG…AVDESVPDPI (197 aa)). The interval 19–26 (GHVDHGKT) is G1. 19 to 26 (GHVDHGKT) lines the GTP pocket. A Mg(2+)-binding site is contributed by Thr26. Residues 62–66 (GITIN) form a G2 region. The tract at residues 83 to 86 (DAPG) is G3. GTP-binding positions include 83–87 (DAPGH) and 138–141 (NKSD). A G4 region spans residues 138-141 (NKSD). Residues 176–178 (SGL) are G5.

This sequence belongs to the TRAFAC class translation factor GTPase superfamily. Classic translation factor GTPase family. EF-Tu/EF-1A subfamily. In terms of assembly, monomer.

The protein resides in the cytoplasm. The catalysed reaction is GTP + H2O = GDP + phosphate + H(+). GTP hydrolase that promotes the GTP-dependent binding of aminoacyl-tRNA to the A-site of ribosomes during protein biosynthesis. The protein is Elongation factor Tu of Renibacterium salmoninarum (strain ATCC 33209 / DSM 20767 / JCM 11484 / NBRC 15589 / NCIMB 2235).